We begin with the raw amino-acid sequence, 293 residues long: Ribonuclease HIII (293 aa).

The 216-residue stretch at 78–293 folds into the RNase H type-2 domain; that stretch reads LPLIGTDEVG…TEKAKKRLER (216 aa). A divalent metal cation-binding residues include Asp84, Glu85, and Asp187.

The protein belongs to the RNase HII family. RnhC subfamily. Mn(2+) is required as a cofactor. Requires Mg(2+) as cofactor.

Its subcellular location is the cytoplasm. It carries out the reaction Endonucleolytic cleavage to 5'-phosphomonoester.. Its function is as follows. Endonuclease that specifically degrades the RNA of RNA-DNA hybrids. The protein is Ribonuclease HIII of Streptococcus pneumoniae serotype 19F (strain G54).